Reading from the N-terminus, the 338-residue chain is Homeobox protein ceh-20 (338 aa).

A PBC domain is found at 4–187; it reads THPANLSELL…VMILRSRFLD (184 aa). A PBC-A region spans residues 11–91; the sequence is ELLDAVLKIN…EGVAGPDKGG (81 aa). The interval 94–187 is PBC-B; that stretch reads GSDASGGDQA…VMILRSRFLD (94 aa). Residues 188 to 250 constitute a DNA-binding region (homeobox; TALE-type); that stretch reads ARRKRRNFSK…NKRIRYKKNM (63 aa).

The protein belongs to the TALE/PBX homeobox family. As to quaternary structure, interacts with Meis protein psa-3. Interacts with homeobox protein nob-1. In terms of tissue distribution, expressed in head dopaminergic neurons.

It is found in the nucleus. Its function is as follows. Transcription factor that binds to the 5'-TGATNNAT(G/T)(G/A)-3' PBC/Hox lineage enhancer region of sem-2 to promote cell fate specification in the postembryonic mesoderm (also known as the M lineage). Required for the M lineage-specific expression of the transcription factor, mls-2. Required for asymmetric division of the T hypodermal cell, probably acting via the regulation of asymmetric expression of Meis protein psa-3 in concert with homeobox protein nob-1 and the Wnt-MAPK pathway. Has a role in the mig-13 pathway to promote the guidance, migration and positioning of Q neuroblasts and their descendants along the anteroposterior body axis and the anterior migration of BDU interneurons. Also required for normal vulval formation. Plays a role in regulating gene expression in dopaminergic neurons, acting in midbody PDE neurons, and acting redundantly with ceh-40 in head neurons. May activate dopamine pathway genes in concert with ETS domain-containing protein ast-1, and homeobox proteins ceh-43 and ceh-40. This chain is Homeobox protein ceh-20, found in Caenorhabditis elegans.